The following is a 228-amino-acid chain: 2,3-bisphosphoglycerate-dependent phosphoglycerate mutase (228 aa).

Substrate is bound by residues 8–15, 21–22, Arg-60, 87–90, Lys-98, 114–115, and 183–184; these read RHGQSEWN, TG, ERHY, RR, and GN. The Tele-phosphohistidine intermediate role is filled by His-9. The active-site Proton donor/acceptor is Glu-87.

It belongs to the phosphoglycerate mutase family. BPG-dependent PGAM subfamily.

It catalyses the reaction (2R)-2-phosphoglycerate = (2R)-3-phosphoglycerate. It functions in the pathway carbohydrate degradation; glycolysis; pyruvate from D-glyceraldehyde 3-phosphate: step 3/5. Functionally, catalyzes the interconversion of 2-phosphoglycerate and 3-phosphoglycerate. This is 2,3-bisphosphoglycerate-dependent phosphoglycerate mutase from Staphylococcus aureus (strain Mu3 / ATCC 700698).